A 201-amino-acid chain; its full sequence is Protease (201 aa).

Active-site residues include histidine 55, aspartate 72, and cysteine 122.

Belongs to the peptidase C5 family. In terms of assembly, interacts with protease cofactor pVI-C; this interaction is necessary for protease activation.

Its subcellular location is the virion. The protein localises to the host nucleus. The enzyme catalyses Cleaves proteins of the adenovirus and its host cell at two consensus sites: -Yaa-Xaa-Gly-Gly-|-Xaa- and -Yaa-Xaa-Gly-Xaa-|-Gly- (in which Yaa is Met, Ile or Leu, and Xaa is any amino acid).. Requires DNA and protease cofactor for maximal activation. Inside nascent virions, becomes partially activated by binding to the viral DNA, allowing it to cleave the cofactor that binds to the protease and fully activates it. Actin, like the viral protease cofactor, seems to act as a cofactor in the cleavage of cytokeratin 18 and of actin itself. Cleaves viral precursor proteins (pTP, pIIIa, pVI, pVII, pVIII, and pX) inside newly assembled particles giving rise to mature virions. Protease complexed to its cofactor slides along the viral DNA to specifically locate and cleave the viral precursors. Mature virions have a weakened organization compared to the unmature virions, thereby facilitating subsequent uncoating. Without maturation, the particle lacks infectivity and is unable to uncoat. Late in adenovirus infection, in the cytoplasm, may participate in the cytoskeleton destruction. Cleaves host cell cytoskeletal keratins K7 and K18. The polypeptide is Protease (Ovis aries (Sheep)).